The chain runs to 208 residues: MSEWIEIGKIVAPQGLKGDLRVYPSSDFPERFTEPGKRWLLSPGQVEPISIELLSGRYVPGKGLYVIELAGIKSRQQAEALRNSQLLIEKGDRPQLEADEFYVPDLIGLTVINQLNGKTIGKVINIIFAGNDLLEVEKISTDTPVISEVVENNLPSKSKRSRDTKNQKKNQSPPSKKILIPFVKEIVPIVNFEQSIIEITPPDGLIDL.

Residues 98–205 form the PRC barrel domain; that stretch reads ADEFYVPDLI…IIEITPPDGL (108 aa). Residues 154–174 form a disordered region; it reads LPSKSKRSRDTKNQKKNQSPP.

The protein belongs to the RimM family. As to quaternary structure, binds ribosomal protein uS19.

It is found in the cytoplasm. An accessory protein needed during the final step in the assembly of 30S ribosomal subunit, possibly for assembly of the head region. Essential for efficient processing of 16S rRNA. May be needed both before and after RbfA during the maturation of 16S rRNA. It has affinity for free ribosomal 30S subunits but not for 70S ribosomes. The chain is Ribosome maturation factor RimM from Trichodesmium erythraeum (strain IMS101).